The primary structure comprises 539 residues: uncharacterized protein (539 aa).

ABC transporter domains lie at 9–276 and 288–536; these read LEVK…EFKK and IKLE…QEMF. ATP is bound by residues 41 to 48 and 325 to 332; these read GKSGAGKS and GTSGAGKT.

This sequence belongs to the ABC transporter superfamily.

This is an uncharacterized protein from Methanocaldococcus jannaschii (strain ATCC 43067 / DSM 2661 / JAL-1 / JCM 10045 / NBRC 100440) (Methanococcus jannaschii).